The primary structure comprises 316 residues: L-lactate dehydrogenase 1 (316 aa).

NAD(+) is bound by residues V17, D38, K43, and Y69. Residues R92 and 124–127 (NPVD) contribute to the substrate site. NAD(+)-binding positions include 122 to 124 (VSN) and T147. Residue 152–155 (DTSR) participates in substrate binding. H179 serves as the catalytic Proton acceptor. Residue T234 participates in substrate binding.

This sequence belongs to the LDH/MDH superfamily. LDH family. In terms of assembly, homotetramer.

The protein localises to the cytoplasm. The enzyme catalyses (S)-lactate + NAD(+) = pyruvate + NADH + H(+). It participates in fermentation; pyruvate fermentation to lactate; (S)-lactate from pyruvate: step 1/1. Its function is as follows. Catalyzes the conversion of lactate to pyruvate. The chain is L-lactate dehydrogenase 1 from Bifidobacterium longum subsp. longum (strain ATCC 15707 / DSM 20219 / JCM 1217 / NCTC 11818 / E194b).